Here is a 277-residue protein sequence, read N- to C-terminus: Phosphate import ATP-binding protein PstB 2 (277 aa).

Residues 31–272 form the ABC transporter domain; the sequence is IEVPGLSLFY…PAKKQTEDYI (242 aa). Residue 63–70 participates in ATP binding; sequence GPSGCGKS.

Belongs to the ABC transporter superfamily. Phosphate importer (TC 3.A.1.7) family. As to quaternary structure, the complex is composed of two ATP-binding proteins (PstB), two transmembrane proteins (PstC and PstA) and a solute-binding protein (PstS).

The protein resides in the cell inner membrane. The enzyme catalyses phosphate(out) + ATP + H2O = ADP + 2 phosphate(in) + H(+). Functionally, part of the ABC transporter complex PstSACB involved in phosphate import. Responsible for energy coupling to the transport system. In Pseudomonas putida (strain ATCC 47054 / DSM 6125 / CFBP 8728 / NCIMB 11950 / KT2440), this protein is Phosphate import ATP-binding protein PstB 2.